A 448-amino-acid polypeptide reads, in one-letter code: N-succinylarginine dihydrolase (448 aa).

Substrate-binding positions include 19–28 (AGLSSGNIAS), Asn-110, and 137–138 (HR). The active site involves Glu-174. Arg-216 lines the substrate pocket. The active site involves His-252. Asp-254 and Asn-366 together coordinate substrate. Residue Cys-372 is the Nucleophile of the active site.

It belongs to the succinylarginine dihydrolase family. In terms of assembly, homodimer.

It catalyses the reaction N(2)-succinyl-L-arginine + 2 H2O + 2 H(+) = N(2)-succinyl-L-ornithine + 2 NH4(+) + CO2. It participates in amino-acid degradation; L-arginine degradation via AST pathway; L-glutamate and succinate from L-arginine: step 2/5. Functionally, catalyzes the hydrolysis of N(2)-succinylarginine into N(2)-succinylornithine, ammonia and CO(2). This Legionella pneumophila (strain Lens) protein is N-succinylarginine dihydrolase.